A 424-amino-acid polypeptide reads, in one-letter code: Probable aminotransferase TAT4 (424 aa).

Belongs to the class-I pyridoxal-phosphate-dependent aminotransferase family. Pyridoxal 5'-phosphate serves as cofactor.

The polypeptide is Probable aminotransferase TAT4 (Arabidopsis thaliana (Mouse-ear cress)).